The following is a 521-amino-acid chain: Bifunctional purine biosynthesis protein PurH (521 aa).

The region spanning 1–147 is the MGS-like domain; sequence MAVIKRALIS…KNNRDVTVVV (147 aa).

It belongs to the PurH family.

It carries out the reaction (6R)-10-formyltetrahydrofolate + 5-amino-1-(5-phospho-beta-D-ribosyl)imidazole-4-carboxamide = 5-formamido-1-(5-phospho-D-ribosyl)imidazole-4-carboxamide + (6S)-5,6,7,8-tetrahydrofolate. It catalyses the reaction IMP + H2O = 5-formamido-1-(5-phospho-D-ribosyl)imidazole-4-carboxamide. Its pathway is purine metabolism; IMP biosynthesis via de novo pathway; 5-formamido-1-(5-phospho-D-ribosyl)imidazole-4-carboxamide from 5-amino-1-(5-phospho-D-ribosyl)imidazole-4-carboxamide (10-formyl THF route): step 1/1. The protein operates within purine metabolism; IMP biosynthesis via de novo pathway; IMP from 5-formamido-1-(5-phospho-D-ribosyl)imidazole-4-carboxamide: step 1/1. The protein is Bifunctional purine biosynthesis protein PurH of Syntrophotalea carbinolica (strain DSM 2380 / NBRC 103641 / GraBd1) (Pelobacter carbinolicus).